We begin with the raw amino-acid sequence, 503 residues long: Protein O-glucosyltransferase 3 (503 aa).

The N-terminal stretch at 1 to 19 (MQALPLGLQLALLVAAGAG) is a signal peptide. Residues 19 to 129 (GARVSAPRSL…VAHSPYILKG (111 aa)) form a Filamin repeat. N-linked (GlcNAc...) asparagine glycosylation is found at Asn56 and Asn302. A Prevents secretion from ER motif is present at residues 500–503 (REEL).

The protein belongs to the KDELC family.

The protein localises to the endoplasmic reticulum lumen. The catalysed reaction is L-seryl-[EGF-like domain protein] + UDP-alpha-D-glucose = 3-O-(beta-D-glucosyl)-L-seryl-[EGF-like domain protein] + UDP + H(+). It catalyses the reaction L-seryl-[EGF-like domain protein] + UDP-alpha-D-xylose = 3-O-(beta-D-xylosyl)-L-seryl-[EGF-like domain protein] + UDP + H(+). It participates in protein modification; protein glycosylation. In terms of biological role, protein glucosyltransferase that catalyzes the transfer of glucose from UDP-glucose to a serine residue within the consensus sequence peptide C-X-N-T-X-G-S-F-X-C. Can also catalyze the transfer of xylose from UDP-xylose but less efficiently. Specifically targets extracellular EGF repeats of proteins such as NOTCH1, NOTCH3, FBN1, FBN2 and LTBP1. May regulate the transport of NOTCH1 and NOTCH3 to the plasma membrane and thereby the Notch signaling pathway. This chain is Protein O-glucosyltransferase 3 (Poglut3), found in Mus musculus (Mouse).